A 122-amino-acid polypeptide reads, in one-letter code: Large ribosomal subunit protein uL14 (122 aa).

Belongs to the universal ribosomal protein uL14 family. Part of the 50S ribosomal subunit. Forms a cluster with proteins L3 and L19. In the 70S ribosome, L14 and L19 interact and together make contacts with the 16S rRNA in bridges B5 and B8.

Functionally, binds to 23S rRNA. Forms part of two intersubunit bridges in the 70S ribosome. The protein is Large ribosomal subunit protein uL14 of Desulfatibacillum aliphaticivorans.